The primary structure comprises 357 residues: Peptide chain release factor 1 (357 aa).

Q235 carries the post-translational modification N5-methylglutamine. Residues 285–305 (KRHNEASAMRSAQVGSGDRSE) are disordered.

The protein belongs to the prokaryotic/mitochondrial release factor family. Methylated by PrmC. Methylation increases the termination efficiency of RF1.

It localises to the cytoplasm. Peptide chain release factor 1 directs the termination of translation in response to the peptide chain termination codons UAG and UAA. This Chlamydia pneumoniae (Chlamydophila pneumoniae) protein is Peptide chain release factor 1 (prfA).